A 454-amino-acid chain; its full sequence is Glutamyl-tRNA(Gln) amidotransferase subunit A (454 aa).

Active-site charge relay system residues include Lys-77 and Ser-152. The active-site Acyl-ester intermediate is Ser-176.

The protein belongs to the amidase family. GatA subfamily. As to quaternary structure, heterotrimer of A, B and C subunits.

The catalysed reaction is L-glutamyl-tRNA(Gln) + L-glutamine + ATP + H2O = L-glutaminyl-tRNA(Gln) + L-glutamate + ADP + phosphate + H(+). Its function is as follows. Allows the formation of correctly charged Gln-tRNA(Gln) through the transamidation of misacylated Glu-tRNA(Gln) in organisms which lack glutaminyl-tRNA synthetase. The reaction takes place in the presence of glutamine and ATP through an activated gamma-phospho-Glu-tRNA(Gln). The protein is Glutamyl-tRNA(Gln) amidotransferase subunit A (gatA) of Methanothermobacter thermautotrophicus (strain ATCC 29096 / DSM 1053 / JCM 10044 / NBRC 100330 / Delta H) (Methanobacterium thermoautotrophicum).